A 361-amino-acid chain; its full sequence is RNA 3'-terminal phosphate cyclase (361 aa).

ATP is bound by residues glutamine 109 and 293–297 (HLADQ). Histidine 319 (tele-AMP-histidine intermediate) is an active-site residue.

This sequence belongs to the RNA 3'-terminal cyclase family. Type 1 subfamily.

It localises to the cytoplasm. The catalysed reaction is a 3'-end 3'-phospho-ribonucleotide-RNA + ATP = a 3'-end 2',3'-cyclophospho-ribonucleotide-RNA + AMP + diphosphate. Functionally, catalyzes the conversion of 3'-phosphate to a 2',3'-cyclic phosphodiester at the end of RNA. The mechanism of action of the enzyme occurs in 3 steps: (A) adenylation of the enzyme by ATP; (B) transfer of adenylate to an RNA-N3'P to produce RNA-N3'PP5'A; (C) and attack of the adjacent 2'-hydroxyl on the 3'-phosphorus in the diester linkage to produce the cyclic end product. The biological role of this enzyme is unknown but it is likely to function in some aspects of cellular RNA processing. This Methylococcus capsulatus (strain ATCC 33009 / NCIMB 11132 / Bath) protein is RNA 3'-terminal phosphate cyclase.